Here is a 424-residue protein sequence, read N- to C-terminus: Glutamyl-tRNA reductase (424 aa).

Substrate-binding positions include 53 to 56, serine 111, 116 to 118, and glutamine 122; these read TCNR and EPQ. Cysteine 54 serves as the catalytic Nucleophile. Residue 191-196 participates in NADP(+) binding; it reads GAGEMI.

Belongs to the glutamyl-tRNA reductase family. In terms of assembly, homodimer.

The enzyme catalyses (S)-4-amino-5-oxopentanoate + tRNA(Glu) + NADP(+) = L-glutamyl-tRNA(Glu) + NADPH + H(+). It participates in porphyrin-containing compound metabolism; protoporphyrin-IX biosynthesis; 5-aminolevulinate from L-glutamyl-tRNA(Glu): step 1/2. Its function is as follows. Catalyzes the NADPH-dependent reduction of glutamyl-tRNA(Glu) to glutamate 1-semialdehyde (GSA). The sequence is that of Glutamyl-tRNA reductase from Bordetella avium (strain 197N).